Here is a 332-residue protein sequence, read N- to C-terminus: Ubiquinol oxidase 1a, mitochondrial (332 aa).

The transit peptide at 1-54 (MSSRMAGSAILRHVGGVRLFTASATSPAAAAAAAARPFLAGGEAVPGVWGLRLM) directs the protein to the mitochondrion. Residues 157-177 (AMMLETVAAVPGMVGGMLLHL) form a helical membrane-spanning segment. 3 residues coordinate Fe cation: glutamate 161, glutamate 200, and histidine 203. The helical transmembrane segment at 219–239 (ALVITVQGVFFNAYFLGYLLS) threads the bilayer. Positions 251, 302, and 305 each coordinate Fe cation.

This sequence belongs to the alternative oxidase family. Homodimer; disulfide-linked. The cofactor is Fe cation. Expressed in roots, leaf sheaths and leaf blades.

The protein localises to the mitochondrion inner membrane. It catalyses the reaction 2 a ubiquinol + O2 = 2 a ubiquinone + 2 H2O. Functionally, catalyzes the cyanide-resistant oxidation of ubiquinol and the reduction of molecular oxygen to water, but does not translocate protons and consequently is not linked to oxidative phosphorylation. May increase respiration when the cytochrome respiratory pathway is restricted, or in response to low temperatures. The sequence is that of Ubiquinol oxidase 1a, mitochondrial from Oryza sativa subsp. japonica (Rice).